Consider the following 275-residue polypeptide: Release factor glutamine methyltransferase (275 aa).

S-adenosyl-L-methionine is bound by residues 117–121 (GTGSG), D140, W168, and N182. Position 182–185 (182–185 (NPPY)) interacts with substrate.

It belongs to the protein N5-glutamine methyltransferase family. PrmC subfamily.

It carries out the reaction L-glutaminyl-[peptide chain release factor] + S-adenosyl-L-methionine = N(5)-methyl-L-glutaminyl-[peptide chain release factor] + S-adenosyl-L-homocysteine + H(+). Methylates the class 1 translation termination release factors RF1/PrfA and RF2/PrfB on the glutamine residue of the universally conserved GGQ motif. This chain is Release factor glutamine methyltransferase, found in Buchnera aphidicola subsp. Schizaphis graminum (strain Sg).